The primary structure comprises 380 residues: Carbonic anhydrase 2 (380 aa).

A signal peptide spans 1 to 20 (MARTGALLLAALALAGCAQA). The region spanning 38–322 (DHWDHSLNGE…HHHRRLLHNH (285 aa)) is the Alpha-carbonic anhydrase domain. 3 cysteine pairs are disulfide-bonded: Cys61–Cys264, Cys194–Cys198, and Cys296–Cys354. Asn101 is a glycosylation site (N-linked (GlcNAc...) asparagine). The Proton acceptor role is filled by His112. N-linked (GlcNAc...) asparagine glycosylation occurs at Asn135. 3 residues coordinate Zn(2+): His163, His165, and His182. 260 to 261 (TT) provides a ligand contact to substrate. Asn297 carries N-linked (GlcNAc...) asparagine glycosylation.

This sequence belongs to the alpha-carbonic anhydrase family. Tetramer of two large and two small subunits linked by two disulfide bonds. Zn(2+) is required as a cofactor.

The protein resides in the periplasm. The catalysed reaction is hydrogencarbonate + H(+) = CO2 + H2O. Functionally, reversible hydration of carbon dioxide. This chain is Carbonic anhydrase 2 (CAH2), found in Chlamydomonas reinhardtii (Chlamydomonas smithii).